A 255-amino-acid polypeptide reads, in one-letter code: Octanoyltransferase (255 aa).

The 185-residue stretch at 54 to 238 folds into the BPL/LPL catalytic domain; that stretch reads GDANELVWLL…SFTTIFGATV (185 aa). Residues 92 to 99, 167 to 169, and 180 to 182 each bind substrate; these read RGGQLTYH, AIG, and GIA. Cys198 (acyl-thioester intermediate) is an active-site residue.

Belongs to the LipB family.

It localises to the cytoplasm. It catalyses the reaction octanoyl-[ACP] + L-lysyl-[protein] = N(6)-octanoyl-L-lysyl-[protein] + holo-[ACP] + H(+). It participates in protein modification; protein lipoylation via endogenous pathway; protein N(6)-(lipoyl)lysine from octanoyl-[acyl-carrier-protein]: step 1/2. Catalyzes the transfer of endogenously produced octanoic acid from octanoyl-acyl-carrier-protein onto the lipoyl domains of lipoate-dependent enzymes. Lipoyl-ACP can also act as a substrate although octanoyl-ACP is likely to be the physiological substrate. The protein is Octanoyltransferase of Rhodopseudomonas palustris (strain BisB5).